A 142-amino-acid polypeptide reads, in one-letter code: Deoxyuridine 5'-triphosphate nucleotidohydrolase (142 aa).

Residues 62–64, Asn-75, 79–81, and Lys-89 contribute to the substrate site; these read RSG and TID.

It belongs to the dUTPase family. It depends on Mg(2+) as a cofactor.

The catalysed reaction is dUTP + H2O = dUMP + diphosphate + H(+). It functions in the pathway pyrimidine metabolism; dUMP biosynthesis; dUMP from dCTP (dUTP route): step 2/2. Its function is as follows. This enzyme is involved in nucleotide metabolism: it produces dUMP, the immediate precursor of thymidine nucleotides and it decreases the intracellular concentration of dUTP so that uracil cannot be incorporated into DNA. This Nautilia profundicola (strain ATCC BAA-1463 / DSM 18972 / AmH) protein is Deoxyuridine 5'-triphosphate nucleotidohydrolase.